The sequence spans 463 residues: Metacaspase-1 (463 aa).

A disordered region spans residues 1-149 (MSWNQYPGGG…PQLQGQGGQS (149 aa)). Residues 7–18 (PGGGHHQQGGYG) are compositionally biased toward gly residues. Residues 20 to 56 (RPPPPQWAQQGPPPPPNMGYRPPPPPQAYYNNPPPPQ) show a composition bias toward pro residues. Over residues 57–83 (QYQRPAPQQNGYQQGGYQQQQQSQGNY) the composition is skewed to low complexity. Catalysis depends on residues histidine 247 and cysteine 309.

This sequence belongs to the peptidase C14B family.

Functionally, involved in cell death (apoptosis). This Cryptococcus neoformans var. neoformans serotype D (strain B-3501A) (Filobasidiella neoformans) protein is Metacaspase-1 (MCA1).